The following is a 68-amino-acid chain: Protein ShdD (68 aa).

Its function is as follows. Involved in the non-oxidative decarboxylation and detoxification of phenolic derivatives under anaerobic conditions, however the precise biochemical function of ShdD in metabolism of phenolic acid is unknown. The protein is Protein ShdD of Sedimentibacter hydroxybenzoicus (Clostridium hydroxybenzoicum).